A 1373-amino-acid chain; its full sequence is DNA-directed RNA polymerase subunit beta (1373 aa).

This sequence belongs to the RNA polymerase beta chain family. The RNAP catalytic core consists of 2 alpha, 1 beta, 1 beta' and 1 omega subunit. When a sigma factor is associated with the core the holoenzyme is formed, which can initiate transcription.

The catalysed reaction is RNA(n) + a ribonucleoside 5'-triphosphate = RNA(n+1) + diphosphate. DNA-dependent RNA polymerase catalyzes the transcription of DNA into RNA using the four ribonucleoside triphosphates as substrates. This Rickettsia rickettsii (strain Iowa) protein is DNA-directed RNA polymerase subunit beta.